The chain runs to 22 residues: Zinc metalloproteinase oxiagin (22 aa).

The Peptidase M12B domain occupies Cys14–Val22.

This sequence belongs to the venom metalloproteinase (M12B) family. P-III subfamily. P-IIId sub-subfamily. As to quaternary structure, heterotrimer; disulfide-linked. The heterotrimer consists of 1 metalloproteinase chain and 2 lectin chains. Requires Zn(2+) as cofactor. Post-translationally, N-glycosylated. As to expression, expressed by the venom gland.

The protein resides in the secreted. Functionally, snake venom metalloproteinase that inhibits the classical complement pathway dose-dependently. It acts by binding to carbohydrates of IgG within the antibody-sensitized sheep erythrocytes (EA) complex, and thus prevents interaction of component C2 with immobilized C4b. Also induces cation-independent hemagglutination that can be prevented by D-galactose pretreatment. The polypeptide is Zinc metalloproteinase oxiagin (Naja oxiana (Central Asian cobra)).